We begin with the raw amino-acid sequence, 411 residues long: LL-diaminopimelate aminotransferase (411 aa).

The substrate site is built by Tyr16 and Gly43. Pyridoxal 5'-phosphate is bound by residues Tyr73, 109–110 (AK), Tyr133, Asn188, Tyr219, and 247–249 (SYS). The substrate site is built by Lys110, Tyr133, and Asn188. Lys250 carries the post-translational modification N6-(pyridoxal phosphate)lysine. Residues Arg258 and Asn293 each coordinate pyridoxal 5'-phosphate. Asn293 and Arg389 together coordinate substrate.

This sequence belongs to the class-I pyridoxal-phosphate-dependent aminotransferase family. LL-diaminopimelate aminotransferase subfamily. In terms of assembly, homodimer. It depends on pyridoxal 5'-phosphate as a cofactor.

The enzyme catalyses (2S,6S)-2,6-diaminopimelate + 2-oxoglutarate = (S)-2,3,4,5-tetrahydrodipicolinate + L-glutamate + H2O + H(+). Its pathway is amino-acid biosynthesis; L-lysine biosynthesis via DAP pathway; LL-2,6-diaminopimelate from (S)-tetrahydrodipicolinate (aminotransferase route): step 1/1. Functionally, involved in the synthesis of meso-diaminopimelate (m-DAP or DL-DAP), required for both lysine and peptidoglycan biosynthesis. Catalyzes the direct conversion of tetrahydrodipicolinate to LL-diaminopimelate. This chain is LL-diaminopimelate aminotransferase, found in Methanosphaera stadtmanae (strain ATCC 43021 / DSM 3091 / JCM 11832 / MCB-3).